The primary structure comprises 149 residues: Protein E6 (149 aa).

2 zinc fingers span residues 30–66 (CVEC…CKLC) and 103–139 (CIIC…CAAC). The PDZ-binding domain motif lies at 147–149 (TAL).

It belongs to the papillomaviridae E6 protein family. Forms homodimers. Interacts with ubiquitin-protein ligase UBE3A/E6-AP and thus forms a complex with human TP53. Interacts with human NFX1 and MAGI3. Interacts with human IRF3; this interaction inhibits the establishment of antiviral state. Interacts with human TYK2; this interaction inhibits JAK-STAT activation by interferon alpha. Interacts with host DLG1; this interaction leads to the proteasomal degradation of DLG1.

Its subcellular location is the host cytoplasm. The protein resides in the host nucleus. Its function is as follows. This protein may be involved in the oncogenic potential of this virus (cervical neoplasia-associated virus). In terms of biological role, plays a major role in the induction and maintenance of cellular transformation. Acts mainly as an oncoprotein by stimulating the destruction of many host cell key regulatory proteins. E6 associates with host UBE3A/E6-AP ubiquitin-protein ligase, and inactivates tumor suppressors TP53 and TP73 by targeting them to the 26S proteasome for degradation. In turn, DNA damage and chromosomal instabilities increase and lead to cell proliferation and cancer development. The complex E6/E6AP targets several other substrates to degradation via the proteasome including host DLG1 or NFX1, a repressor of human telomerase reverse transcriptase (hTERT). The resulting increased expression of hTERT prevents the shortening of telomere length leading to cell immortalization. Other cellular targets including BAK1, Fas-associated death domain-containing protein (FADD) and procaspase 8, are degraded by E6/E6AP causing inhibition of apoptosis. E6 also inhibits immune response by interacting with host IRF3 and TYK2. These interactions prevent IRF3 transcriptional activities and inhibit TYK2-mediated JAK-STAT activation by interferon alpha resulting in inhibition of the interferon signaling pathway. In Homo sapiens (Human), this protein is Protein E6.